The primary structure comprises 462 residues: Ribosomal oxygenase 2 (462 aa).

A disordered region spans residues 1–24 (MPKKARPAGDGKEQGPAPKQVKVE). The JmjC domain maps to 139–271 (QPQRFKDELW…SSWGDFLLDT (133 aa)). The Fe cation site is built by histidine 179, aspartate 181, and histidine 240. Serine 308 carries the post-translational modification Phosphoserine.

This sequence belongs to the ROX family. MINA53 subfamily. Fe(2+) serves as cofactor.

It localises to the nucleus. Its subcellular location is the nucleolus. It catalyses the reaction L-histidyl-[ribosomal protein uL15] + 2-oxoglutarate + O2 = (3S)-3-hydroxy-L-histidyl-[ribosomal protein uL15] + succinate + CO2. The catalysed reaction is L-histidyl-[protein] + 2-oxoglutarate + O2 = (3S)-3-hydroxy-L-histidyl-[protein] + succinate + CO2. Functionally, oxygenase that can act as both a histone lysine demethylase and a ribosomal histidine hydroxylase. Is involved in the demethylation of trimethylated 'Lys-9' on histone H3 (H3K9me3), leading to an increase in ribosomal RNA expression. Also catalyzes the hydroxylation of 60S ribosomal protein L27a on 'His-39'. May play an important role in cell growth and survival. May be involved in ribosome biogenesis, most likely during the assembly process of pre-ribosomal particles. This is Ribosomal oxygenase 2 (RIOX2) from Bos taurus (Bovine).